The chain runs to 565 residues: O-fucosyltransferase 7 (565 aa).

The chain crosses the membrane as a helical; Signal-anchor for type II membrane protein span at residues 17 to 37; that stretch reads VLIWAICVMTLLCFLTVHIYV. 5 N-linked (GlcNAc...) asparagine glycosylation sites follow: asparagine 62, asparagine 73, asparagine 104, asparagine 124, and asparagine 190. 327–329 is a binding site for substrate; it reads HLR. The N-linked (GlcNAc...) asparagine glycan is linked to asparagine 441. The disordered stretch occupies residues 515-565; the sequence is NEIHKTRQGSPRRRKGPASGTKGLERHRSEESFYENPLPDCLCQRDPSKAR. Residues 520 to 530 are compositionally biased toward basic residues; the sequence is TRQGSPRRRKG.

The protein belongs to the glycosyltransferase GT106 family.

It is found in the membrane. It functions in the pathway glycan metabolism. The sequence is that of O-fucosyltransferase 7 from Arabidopsis thaliana (Mouse-ear cress).